A 658-amino-acid chain; its full sequence is Probable rhamnogalacturonate lyase B (658 aa).

A signal peptide spans 1–19 (MRFAIPLGAACAWAGVALA). Residues Asn110, Asn143, Asn239, Asn280, Asn522, Asn530, Asn564, Asn571, Asn592, and Asn633 are each glycosylated (N-linked (GlcNAc...) asparagine).

Belongs to the polysaccharide lyase 4 family.

The protein localises to the secreted. The enzyme catalyses Endotype eliminative cleavage of L-alpha-rhamnopyranosyl-(1-&gt;4)-alpha-D-galactopyranosyluronic acid bonds of rhamnogalacturonan I domains in ramified hairy regions of pectin leaving L-rhamnopyranose at the reducing end and 4-deoxy-4,5-unsaturated D-galactopyranosyluronic acid at the non-reducing end.. In terms of biological role, pectinolytic enzymes consist of four classes of enzymes: pectin lyase, polygalacturonase, pectin methylesterase and rhamnogalacturonase. Degrades the rhamnogalacturonan I (RG-I) backbone of pectin. The chain is Probable rhamnogalacturonate lyase B (rglB) from Neosartorya fischeri (strain ATCC 1020 / DSM 3700 / CBS 544.65 / FGSC A1164 / JCM 1740 / NRRL 181 / WB 181) (Aspergillus fischerianus).